Here is a 579-residue protein sequence, read N- to C-terminus: MNKLYIGNLSENAAPSDLESIFKDAKIPVSGPFLVKTGYAFVDCPDESWALKAIEALSGKIELHGKPIEVEHSVPKRQRIRKLQIRNIPPHLQWEVLDSLLVQYGVVESCEQVNTDSETAVVNVTYSSKDQARQALDKLNGFQLENFTLKVAYIPDEMAAQQNPLQQPRGRRGLGQRGSSRQGSPGSVSKQKPCDLPLRLLVPTQFVGAIIGKEGATIRNITKQTQSKIDVHRKENAGAAEKSITILSTPEGTSAACKSILEIMHKEAQDIKFTEEIPLKILAHNNFVGRLIGKEGRNLKKIEQDTDTKITISPLQELTLYNPERTITVKGNVETCAKAEEEIMKKIRESYENDIASMNLQAHLIPGLNLNALGLFPPTSGMPPPTSGPPSAMTPPYPQFEQSETETVHLFIPALSVGAIIGKQGQHIKQLSRFAGASIKIAPAEAPDAKVRMVIITGPPEAQFKAQGRIYGKIKEENFVSPKEEVKLEAHIRVPSFAAGRVIGKGGKTVNELQNLSSAEVVVPRDQTPDENDQVVVKITGHFYACQVAQRKIQEILTQVKQHQQQKALQSGPPQSRRK.

RRM domains are found at residues 2–75 (NKLY…HSVP) and 81–156 (RKLQ…YIPD). Residues 160 to 192 (AQQNPLQQPRGRRGLGQRGSSRQGSPGSVSKQK) form a disordered region. The span at 177–187 (RGSSRQGSPGS) shows a compositional bias: low complexity. S184 is subject to Phosphoserine. 3 KH domains span residues 195–260 (DLPL…CKSI), 276–343 (EIPL…EEEI), and 405–470 (TETV…QGRI). Residues K450 and K475 each participate in a glycyl lysine isopeptide (Lys-Gly) (interchain with G-Cter in SUMO2) cross-link. The KH 4 domain occupies 487-553 (KLEAHIRVPS…YACQVAQRKI (67 aa)). Residue T528 is modified to Phosphothreonine.

The protein belongs to the RRM IMP/VICKZ family. As to quaternary structure, can form homooligomers and heterooligomers with IGF2BP1 and IGF2BP3 in an RNA-dependent manner. Interacts with IGF2BP1. Interacts with ELAVL1, DHX9, HNRNPU, MATR3 and PABPC1. As to expression, expressed in fetal liver, fetal lung, fetal kidney, fetal thymus, fetal placenta, fetal follicles of ovary and gonocytes of testis, growing oocytes, spermatogonia and semen (at protein level). Expressed in cervix adenocarcinoma, in testicular, pancreatic and renal-cell carcinomas (at protein level). Expressed ubiquitously during fetal development at 8 and 14 weeks of gestation. Expressed in ovary, testis, brain, placenta, pancreatic cancer tissues and pancreatic cancer cell lines.

The protein resides in the nucleus. Its subcellular location is the cytoplasm. It localises to the P-body. The protein localises to the stress granule. RNA-binding factor that may recruit target transcripts to cytoplasmic protein-RNA complexes (mRNPs). This transcript 'caging' into mRNPs allows mRNA transport and transient storage. It also modulates the rate and location at which target transcripts encounter the translational apparatus and shields them from endonuclease attacks or microRNA-mediated degradation. Preferentially binds to N6-methyladenosine (m6A)-containing mRNAs and increases their stability. Binds to the 3'-UTR of CD44 mRNA and stabilizes it, hence promotes cell adhesion and invadopodia formation in cancer cells. Binds to beta-actin/ACTB and MYC transcripts. Increases MYC mRNA stability by binding to the coding region instability determinant (CRD) and binding is enhanced by m6A-modification of the CRD. Binds to the 5'-UTR of the insulin-like growth factor 2 (IGF2) mRNAs. In Homo sapiens (Human), this protein is Insulin-like growth factor 2 mRNA-binding protein 3 (IGF2BP3).